The following is a 269-amino-acid chain: Integral membrane protein 2C (269 aa).

Residue T39 is modified to Phosphothreonine. The helical; Signal-anchor for type II membrane protein transmembrane segment at 57–77 (VGGVCYLSMGMVVLLMGLVFA) threads the bilayer. One can recognise a BRICHOS domain in the interval 138–232 (FGGGDPADII…LCNGKDTYRL (95 aa)). The cysteines at positions 165 and 224 are disulfide-linked. N171 carries an N-linked (GlcNAc...) asparagine glycan.

The protein belongs to the ITM2 family. Interacts with BACE1. Interacts with APP. Interacts with STMN2. In terms of processing, type I membrane-bound, as well as soluble, furin has a pre-eminent role in ITM2C proteolytic processing. PCSK7 and PCSK5 may also be involved although to a lesser extent. The soluble form of PCSK7 is incapable of processing ITM2C. Fails to undergo shedding by ADAM10 and intramembrane cleavage by SPPL2B.

It is found in the lysosome membrane. The protein localises to the cell membrane. Its function is as follows. Negative regulator of amyloid-beta peptide production. May inhibit the processing of APP by blocking its access to alpha- and beta-secretase. Binding to the beta-secretase-cleaved APP C-terminal fragment is negligible, suggesting that ITM2C is a poor gamma-secretase cleavage inhibitor. May play a role in TNF-induced cell death and neuronal differentiation. This chain is Integral membrane protein 2C (Itm2c), found in Mus musculus (Mouse).